The primary structure comprises 315 residues: Ribosomal RNA small subunit methyltransferase H (315 aa).

Residues 37 to 39 (GGH), Asp57, Phe83, Asp105, and Gln112 each bind S-adenosyl-L-methionine.

This sequence belongs to the methyltransferase superfamily. RsmH family.

Its subcellular location is the cytoplasm. The catalysed reaction is cytidine(1402) in 16S rRNA + S-adenosyl-L-methionine = N(4)-methylcytidine(1402) in 16S rRNA + S-adenosyl-L-homocysteine + H(+). In terms of biological role, specifically methylates the N4 position of cytidine in position 1402 (C1402) of 16S rRNA. In Pseudomonas putida (strain W619), this protein is Ribosomal RNA small subunit methyltransferase H.